The chain runs to 172 residues: Putative defense protein (172 aa).

The signal sequence occupies residues 1–21 (MKLVVAAVLAMAASRWRRLSA). In terms of domain architecture, Reelin spans 22–172 (HGQVPSSTCA…LRQLDNAVAA (151 aa)).

It belongs to the insect defense protein family. In adults, in hemolymph.

Its subcellular location is the secreted. Its function is as follows. May have antimicrobial activity. This chain is Putative defense protein, found in Locusta migratoria (Migratory locust).